A 133-amino-acid chain; its full sequence is Small ribosomal subunit protein uS8 (133 aa).

Residues 1–29 (MANHDPISDMLTRIRNASEKRHETTRIPA) form a disordered region. Over residues 16–25 (NASEKRHETT) the composition is skewed to basic and acidic residues.

It belongs to the universal ribosomal protein uS8 family. As to quaternary structure, part of the 30S ribosomal subunit. Contacts proteins S5 and S12.

Its function is as follows. One of the primary rRNA binding proteins, it binds directly to 16S rRNA central domain where it helps coordinate assembly of the platform of the 30S subunit. The polypeptide is Small ribosomal subunit protein uS8 (Prochlorococcus marinus (strain MIT 9211)).